Here is a 144-residue protein sequence, read N- to C-terminus: MNFKYIVAVSFLIASAYARSEENDEQSLSQRDVLEEESLREIRGIGAKILGGVKTALKGALKELASTYVNGKRTAEDHEVMKRLEAVMRDLDSLDYPEEAAERETRGFNQEEIANLFTKKEKRILGPVISTIGGVLGGLLKNLG.

The signal sequence occupies residues M1–A18. A propeptide spanning residues R19 to R43 is cleaved from the precursor. N70 is subject to Asparagine amide. Positions T74–R123 are excised as a propeptide. The residue at position 143 (L143) is a Leucine amide.

This sequence belongs to the bombinin family. In terms of tissue distribution, expressed by the skin glands.

The protein localises to the secreted. Maximin-7 shows antimicrobial activity against bacteria and against the fungus C.albicans. It has little hemolytic activity. Functionally, maximin-H1 shows antibacterial activity against both Gram-positive and Gram-negative bacteria. It also shows antimicrobial activity against the fungus C.albicans. Shows strong hemolytic activity. The sequence is that of Maximins 7/H1 from Bombina maxima (Giant fire-bellied toad).